The following is a 446-amino-acid chain: Light-independent protochlorophyllide reductase subunit N (446 aa).

[4Fe-4S] cluster-binding residues include cysteine 22, cysteine 47, and cysteine 107.

It belongs to the BchN/ChlN family. As to quaternary structure, protochlorophyllide reductase is composed of three subunits; ChlL, ChlN and ChlB. Forms a heterotetramer of two ChlB and two ChlN subunits. [4Fe-4S] cluster serves as cofactor.

The protein localises to the plastid. It localises to the chloroplast. It catalyses the reaction chlorophyllide a + oxidized 2[4Fe-4S]-[ferredoxin] + 2 ADP + 2 phosphate = protochlorophyllide a + reduced 2[4Fe-4S]-[ferredoxin] + 2 ATP + 2 H2O. Its pathway is porphyrin-containing compound metabolism; chlorophyll biosynthesis (light-independent). Component of the dark-operative protochlorophyllide reductase (DPOR) that uses Mg-ATP and reduced ferredoxin to reduce ring D of protochlorophyllide (Pchlide) to form chlorophyllide a (Chlide). This reaction is light-independent. The NB-protein (ChlN-ChlB) is the catalytic component of the complex. The sequence is that of Light-independent protochlorophyllide reductase subunit N from Mesostigma viride (Green alga).